The sequence spans 375 residues: Saccharopine dehydrogenase [NAD(+), L-lysine-forming] (375 aa).

Residues arginine 18 and lysine 78 each contribute to the L-saccharopine site. Lysine 78 (proton acceptor) is an active-site residue. Residue histidine 96 is the Proton donor of the active site. Glutamine 101 is a binding site for L-saccharopine. Arginine 130 lines the NAD(+) pocket. 2 residues coordinate L-saccharopine: arginine 131 and phenylalanine 135. NAD(+)-binding positions include 203–204 (GR), aspartate 227, threonine 231, tyrosine 252, and valine 279. Cysteines 205 and 250 form a disulfide. L-saccharopine is bound at residue 280 to 282 (SAD). 322-325 (IDHL) provides a ligand contact to NAD(+).

This sequence belongs to the AlaDH/PNT family. In terms of assembly, monomer.

The enzyme catalyses L-saccharopine + NAD(+) + H2O = L-lysine + 2-oxoglutarate + NADH + H(+). It functions in the pathway amino-acid biosynthesis; L-lysine biosynthesis via AAA pathway; L-lysine from L-alpha-aminoadipate (fungal route): step 3/3. Its function is as follows. Catalyzes the NAD(+)-dependent cleavage of saccharopine to L-lysine and 2-oxoglutarate, the final step in the alpha-aminoadipate (AAA) pathway for lysin biosynthesis. The chain is Saccharopine dehydrogenase [NAD(+), L-lysine-forming] from Emericella nidulans (strain FGSC A4 / ATCC 38163 / CBS 112.46 / NRRL 194 / M139) (Aspergillus nidulans).